A 127-amino-acid chain; its full sequence is Small ribosomal subunit protein bS6 (127 aa).

It belongs to the bacterial ribosomal protein bS6 family.

Binds together with bS18 to 16S ribosomal RNA. This Sulfurovum sp. (strain NBC37-1) protein is Small ribosomal subunit protein bS6.